The chain runs to 477 residues: MSDASQGLRLYNTLTRAKTDFVPIDALNVRMYVCGPTVYDFAHIGNARPVIVFDVLFRLLRHLYGQAHVTYVRNITDVDDKINARALRDFGSEISAGKLSLNEAIRRVTEKTADQFHRDVATLGCLEPTVEPRATEFVEPRADGKADMITLIQSLIKRGHAYAAAGEVLFDTASMPDYGQLSKRNLDEQQAGARVAVDAHKKNPGDFVLWKLSSPEEPGWQSPWGRGRPGWHIECSAMSAAYLGEVFDIHGGGLDLIFPHHENEIAQSRCAHGTSVMANVWMHNGFLQVEGQKMSKSLGNFYSIHELLETETFGGRSWPGEVLRLAMLMTHYREPIDFSVRKLEEAENTLRKWKRAADLAPAAGQLPVEVIDALSDDLATYAAFQVLTQLAGEAADGNEAAAALKASLLFLGFDVASADIDEDGVAKAIANRLALIAAKNWTEADRIRDELLAQGVQLKDGKDPVTGERITTWEVKR.

Cys-34 provides a ligand contact to Zn(2+). Positions 36–46 match the 'HIGH' region motif; it reads PTVYDFAHIGN. Positions 235, 260, and 264 each coordinate Zn(2+). Positions 293–297 match the 'KMSKS' region motif; the sequence is KMSKS. Lys-296 is an ATP binding site.

Belongs to the class-I aminoacyl-tRNA synthetase family. In terms of assembly, monomer. Zn(2+) serves as cofactor.

The protein localises to the cytoplasm. The enzyme catalyses tRNA(Cys) + L-cysteine + ATP = L-cysteinyl-tRNA(Cys) + AMP + diphosphate. The polypeptide is Cysteine--tRNA ligase (Mesorhizobium japonicum (strain LMG 29417 / CECT 9101 / MAFF 303099) (Mesorhizobium loti (strain MAFF 303099))).